We begin with the raw amino-acid sequence, 118 residues long: Pterin-4-alpha-carbinolamine dehydratase (118 aa).

It belongs to the pterin-4-alpha-carbinolamine dehydratase family.

It catalyses the reaction (4aS,6R)-4a-hydroxy-L-erythro-5,6,7,8-tetrahydrobiopterin = (6R)-L-erythro-6,7-dihydrobiopterin + H2O. Its function is as follows. Involved in tetrahydrobiopterin biosynthesis. Seems to both prevent the formation of 7-pterins and accelerate the formation of quinonoid-BH2. May also have a positive regulatory role in the expression of phhA. This chain is Pterin-4-alpha-carbinolamine dehydratase (phhB), found in Pseudomonas syringae pv. tomato (strain ATCC BAA-871 / DC3000).